The sequence spans 323 residues: o-succinylbenzoate synthase (323 aa).

The active-site Proton donor is the lysine 134. Residues aspartate 162, glutamate 191, and aspartate 214 each coordinate Mg(2+). Catalysis depends on lysine 236, which acts as the Proton acceptor.

Belongs to the mandelate racemase/muconate lactonizing enzyme family. MenC type 1 subfamily. A divalent metal cation is required as a cofactor.

It catalyses the reaction (1R,6R)-6-hydroxy-2-succinyl-cyclohexa-2,4-diene-1-carboxylate = 2-succinylbenzoate + H2O. The protein operates within quinol/quinone metabolism; 1,4-dihydroxy-2-naphthoate biosynthesis; 1,4-dihydroxy-2-naphthoate from chorismate: step 4/7. It functions in the pathway quinol/quinone metabolism; menaquinone biosynthesis. In terms of biological role, converts 2-succinyl-6-hydroxy-2,4-cyclohexadiene-1-carboxylate (SHCHC) to 2-succinylbenzoate (OSB). The sequence is that of o-succinylbenzoate synthase from Proteus mirabilis (strain HI4320).